A 311-amino-acid polypeptide reads, in one-letter code: Ornithine carbamoyltransferase (311 aa).

Carbamoyl phosphate-binding positions include 54 to 57, Gln-81, Arg-105, and 132 to 135; these read STRT and HPCQ. L-ornithine-binding positions include Asn-164, Asp-228, and 232–233; that span reads SM. Residues 268–269 and Arg-296 contribute to the carbamoyl phosphate site; that span reads CL.

It belongs to the aspartate/ornithine carbamoyltransferase superfamily. OTCase family.

The protein resides in the cytoplasm. It catalyses the reaction carbamoyl phosphate + L-ornithine = L-citrulline + phosphate + H(+). It participates in amino-acid biosynthesis; L-arginine biosynthesis; L-arginine from L-ornithine and carbamoyl phosphate: step 1/3. Reversibly catalyzes the transfer of the carbamoyl group from carbamoyl phosphate (CP) to the N(epsilon) atom of ornithine (ORN) to produce L-citrulline. The protein is Ornithine carbamoyltransferase of Renibacterium salmoninarum (strain ATCC 33209 / DSM 20767 / JCM 11484 / NBRC 15589 / NCIMB 2235).